The primary structure comprises 316 residues: Probable cell division protein WhiA (316 aa).

The H-T-H motif DNA-binding region spans T275–A309.

It belongs to the WhiA family.

In terms of biological role, involved in cell division and chromosome segregation. This is Probable cell division protein WhiA from Bacillus mycoides (strain KBAB4) (Bacillus weihenstephanensis).